A 309-amino-acid chain; its full sequence is MDYVSPGHSVLLLWGGAVSGDTIQTTVGNLQTKVGEKGHVRVEHVDRLLLSNHGSSTFDVVMSGTINPPTTVHSGDVLAEVARLLKPSGRAVVCEPTVSTDNGGTLRTAAKLSSSLKLAGLVSVSEAKEVSLSQQEHDLLKQALSVDGIQVVEVSASKPSYEVGSSAQLTLSFAKKKQVEKPKLDENTAKIWSLSAVDMNDDDIDLLDPDELLDEEDLKKPDPASLKAQCGTGGDTKKRKACKNCTCGLAEELEGDQPGKTASKPATSACGNCYLGDAFRCASCPYLGMPAFKPGEKITLTDRQLKGDI.

The N-terminal SAM-like domain stretch occupies residues 4–169 (VSPGHSVLLL…SYEVGSSAQL (166 aa)). The linker stretch occupies residues 170 to 218 (TLSFAKKKQVEKPKLDENTAKIWSLSAVDMNDDDIDLLDPDELLDEEDL). Residues Cys230, Cys242, Cys245, and Cys247 each contribute to the [2Fe-2S] cluster site. The interval 230–247 (CGTGGDTKKRKACKNCTC) is fe-S binding site A. [4Fe-4S] cluster contacts are provided by Cys270, Cys273, Cys281, and Cys284. 2 consecutive short sequence motifs (cx2C motif) follow at residues 270–273 (CGNC) and 281–284 (CASC). The fe-S binding site B stretch occupies residues 270 to 284 (CGNCYLGDAFRCASC).

Belongs to the anamorsin family. In terms of assembly, monomer. [2Fe-2S] cluster serves as cofactor. The cofactor is [4Fe-4S] cluster.

The protein localises to the cytoplasm. It is found in the mitochondrion intermembrane space. In terms of biological role, component of the cytosolic iron-sulfur (Fe-S) protein assembly (CIA) machinery. Required for the maturation of extramitochondrial Fe-S proteins. Part of an electron transfer chain functioning in an early step of cytosolic Fe-S biogenesis, facilitating the de novo assembly of a [4Fe-4S] cluster on the cytosolic Fe-S scaffold complex. Electrons are transferred from NADPH via a FAD- and FMN-containing diflavin oxidoreductase. Together with the diflavin oxidoreductase, also required for the assembly of the diferric tyrosyl radical cofactor of ribonucleotide reductase (RNR), probably by providing electrons for reduction during radical cofactor maturation in the catalytic small subunit. This chain is Anamorsin homolog, found in Branchiostoma floridae (Florida lancelet).